The sequence spans 436 residues: Serine--tRNA ligase (436 aa).

L-serine is bound at residue 242–244 (TAE). An ATP-binding site is contributed by 273-275 (RSE). Glu-296 contributes to the L-serine binding site. Residue 360-363 (EISS) participates in ATP binding. Residue Ser-395 participates in L-serine binding.

It belongs to the class-II aminoacyl-tRNA synthetase family. Type-1 seryl-tRNA synthetase subfamily. Homodimer. The tRNA molecule binds across the dimer.

Its subcellular location is the cytoplasm. The enzyme catalyses tRNA(Ser) + L-serine + ATP = L-seryl-tRNA(Ser) + AMP + diphosphate + H(+). It carries out the reaction tRNA(Sec) + L-serine + ATP = L-seryl-tRNA(Sec) + AMP + diphosphate + H(+). It participates in aminoacyl-tRNA biosynthesis; selenocysteinyl-tRNA(Sec) biosynthesis; L-seryl-tRNA(Sec) from L-serine and tRNA(Sec): step 1/1. Its function is as follows. Catalyzes the attachment of serine to tRNA(Ser). Is also able to aminoacylate tRNA(Sec) with serine, to form the misacylated tRNA L-seryl-tRNA(Sec), which will be further converted into selenocysteinyl-tRNA(Sec). The chain is Serine--tRNA ligase from Polynucleobacter necessarius subsp. necessarius (strain STIR1).